Reading from the N-terminus, the 349-residue chain is Putative F-box/kelch-repeat protein At4g02310 (349 aa).

One can recognise an F-box domain in the interval 11–58 (SLFSLLPNDIVLNILARVPRWYHPILSCVSKNLRFLVSSSELKITRSL). One copy of the Kelch repeat lies at 154 to 204 (KIYVFGGIDDMNKRYYEGIHAQVFDLKTQTWHVGPNLSVKLACLNRSVVTP).

The polypeptide is Putative F-box/kelch-repeat protein At4g02310 (Arabidopsis thaliana (Mouse-ear cress)).